Reading from the N-terminus, the 207-residue chain is Keratin-associated protein 27-1 (207 aa).

The interval 184-207 (QLLESSPGVEPTCCVTGGSQLPSK) is disordered.

Belongs to the PMG family. Interacts with hair keratins.

Functionally, in the hair cortex, hair keratin intermediate filaments are embedded in an interfilamentous matrix, consisting of hair keratin-associated proteins (KRTAP), which are essential for the formation of a rigid and resistant hair shaft through their extensive disulfide bond cross-linking with abundant cysteine residues of hair keratins. The matrix proteins include the high-sulfur and high-glycine-tyrosine keratins. The protein is Keratin-associated protein 27-1 (KRTAP27-1) of Homo sapiens (Human).